The sequence spans 1839 residues: MDTRFPFSPAEVSKVRVVQFGILSPDEIRQMSVIHVEHSETTEKGKPKVGGLSDTRLGTIDRKVKCETCMANMAECPGHFGYLELAKPMYHVGFMKTVLSIMRCVCFNCSKILADEEEHKFKQAMKIKNPKNRLKKILDACKNKTKCDGGDDIDDVQSHSTDEPVKKSRGGCGAQQPKLTIEGMKMIAEYKIQRKKNDEPDQLPEPAERKQTLGADRVLSVLKRISDADCQLLGFNPKFARPDWMILEVLPIPPPPVRPSVMMDATSRSEDDLTHQLAMIIRHNENLKRQEKNGAPAHIISEFTQLLQFHIATYFDNELPGQPRATQKSGRPIKSICSRLKAKEGRIRGNLMGKRVDFSARTVITPDPTINIDELGVPWSIALNLTYPETVTPYNIERLKELVDYGPHPPPGKTGAKYIIRDDGQRLDLRYLKKSSDQHLELGYKVERHLQDGDFVLFNRQPSLHKMSIMGHRIRIMPYSTFRLNLSVTSPYNADFDGDEMNMHVPQSFETRAEVLELMMVPKCIVSPQANRPVMGIVQDTLLGCRKITKRDTFIEKDVFMNTLMWWEDFDGKVPAPAILKPRPLWTGKQVFNLIIPKQINLLRYSAWHADTETGFITPGDTQVRIERGELLAGTLCKKTLGTSNGSLVHVIWEEVGPDAARKFLGHTQWLVNYWLLQNGFTIGIGDTIADSSTMEKINETISNAKTAVKDLIRQFQGKELDPEPGRTMRDTFENRVNQVLNKARDDAGSSAQKSLAETNNLKAMVTAGSKGSFINISQMTACVGQQNVEGKRIPFGFDGRTLPHFTKDDYGPESRGFVENSYLRGLTPQEFFFHAMGGREGLIDTAVKTSETGYIQRRLVKAMEDIMVKYDGTVRNSLGDVIQFLYGEDGMDAVWIESQKLDSLKMKKSEFDRTFKYEIDDENWNPTYLSDEHLEDLKGIRELRDVFDAEYSKLETDRFQLGTEIATNGDSTWPLPVNIKRHIWNAQKTFKIDLRKISDMHPVEIVDAVDKLQERLLVVPGDDALSVEAQKNATLFFNILLRSTLASKRVLEEYKLSREAFEWVIGEIESRFLQSLVAPGEMIGCVAAQSIGEPATQMTLNTFHYAGVSAKNVTLGVPRLREIINVAKRIKTPSLSVYLTPEASKSKEGAKTVQCALEYTTLRSVTQATEVWYDPDPMSTIIEEDFEFVRSYYEMPDEDVSPDKISPWLLRIELNREMMVDKKLSMADIAEKINLEFDDDLTCIFNDDNAQKLILRIRIMNDEGPKGELQDESAEDDVFLKKIESNMLTEMALRGIPDINKVFIKQVRKSRFDEEGGFKTSEEWMLDTEGVNLLAVMCHEDVDPKRTTSNHLIEIIEVLGIEAVRRALLDELRVVISFDGSYVNYRHLAILCDTMTYRGHLMAITRHGINRNDTGPLMRCSFEETVDILLDAAAYAETDCLRGVTENIMLGQLAPIGTGDCELYLNDEMLKNAIELQLPSYMDGLEFGMTPARSPVSGTPYHEGMMSPNYLLSPNMRLSPMSDAQFSPYVGGMAFSPSSSPGYSPSSPGYSPTSPGYSPTSPGYSPTSPGYSPTSPTYSPSSPGYSPTSPAYSPTSPSYSPTSPSYSPTSPSYSPTSPSYSPTSPSYSPTSPSYSPTSPAYSPTSPAYSPTSPAYSPTSPSYSPTSPSYSPTSPSYSPTSPSYSPTSPSYSPTSPAYSPTSPGYSPTSPSYSPTSPSYGPTSPSYNPQSAKYSPSIAYSPSNARLSPASPYSPTSPNYSPTSPSYSPTSPSYSPSSPTYSPSSPYSSGASPDYSPSAGYSPTLPGYSPSSTGQYTPHEGDKKDKTGKKDASKDDKGNP.

Zn(2+) is bound by residues C66, C69, C76, H79, C106, C109, and C147. The interval 152–174 is disordered; that stretch reads DIDDVQSHSTDEPVKKSRGGCGA. The segment covering 156 to 166 has biased composition (basic and acidic residues); that stretch reads VQSHSTDEPVK. A Zn(2+)-binding site is contributed by C172. Residues 326-397 mediate DNA binding; sequence TQKSGRPIKS…PETVTPYNIE (72 aa). 3 residues coordinate Mg(2+): D495, D497, and D499. Residues 785–795 form an alpha-amanitin binding region; that stretch reads GQQNVEGKRIP. The bridging helix stretch occupies residues 829–841; sequence PQEFFFHAMGGRE. Over residues 1538 to 1726 the composition is skewed to low complexity; sequence PSSSPGYSPS…PSYGPTSPSY (189 aa). The interval 1538–1839 is disordered; the sequence is PSSSPGYSPS…DASKDDKGNP (302 aa). 27 consecutive repeat copies span residues 1544–1550, 1551–1557, 1558–1564, 1565–1571, 1572–1578, 1579–1585, 1586–1592, 1593–1599, 1600–1606, 1607–1613, 1614–1620, 1621–1627, 1628–1634, 1635–1641, 1642–1648, 1649–1655, 1656–1662, 1663–1669, 1670–1676, 1677–1683, 1684–1690, 1691–1697, 1698–1704, 1705–1711, 1712–1718, 1719–1725, and 1726–1732. The interval 1544–1813 is C-terminal domain (CTD); 37 X 7 AA tandem approximate repeats of Y-[GNS]-P-[QST]-[LNS]-[APT]-[AGKNRSTY]; sequence YSPSSPGYSP…LPGYSPSSTG (270 aa). The span at 1727-1745 shows a compositional bias: polar residues; sequence NPQSAKYSPSIAYSPSNAR. The 28; approximate repeat unit spans residues 1733–1738; that stretch reads YSPSIA. 6 tandem repeats follow at residues 1739–1745, 1752–1758, 1759–1765, 1766–1772, 1773–1779, and 1780–1786. Low complexity predominate over residues 1747-1798; it reads SPASPYSPTSPNYSPTSPSYSPTSPSYSPSSPTYSPSSPYSSGASPDYSPSA. The stretch at 1794-1799 is one 35; approximate repeat; the sequence is YSPSAG. Repeat copies occupy residues 1800 to 1806 and 1807 to 1813. The span at 1818–1839 shows a compositional bias: basic and acidic residues; the sequence is HEGDKKDKTGKKDASKDDKGNP.

Belongs to the RNA polymerase beta' chain family. Component of the RNA polymerase II (Pol II) complex consisting of at least 12 subunits. Interacts with RDM1. Interacts (via CTD) with PRP40A, PRP40B, PRP40C and CYP59. Interacts with MEE12/CCG1 and MEE14/CBP1. Binds (via CTD) to ATX1, especially when phosphorylated on 'Ser-5' of the heptapeptide repeat. Post-translationally, the tandem 7 residues repeats in the C-terminal domain (CTD) can be highly phosphorylated. The phosphorylation activates Pol II. Phosphorylation occurs mainly at residues 'Ser-2' and 'Ser-5' of the heptapeptide repeat. The phosphorylation state is believed to result from the balanced action of site-specific CTD kinases and phosphatase, and a 'CTD code' that specifies the position of Pol II within the transcription cycle has been proposed. ATX1 seems to regulate phosphorylation statment. 'Ser-2' and 'Ser-5' phosphorylation are repressed by flavopiridol (Flap) and seliciclib (Selic), inhibitors of CDK7 and CDK9.

It is found in the nucleus. The enzyme catalyses RNA(n) + a ribonucleoside 5'-triphosphate = RNA(n+1) + diphosphate. DNA-dependent RNA polymerase catalyzes the transcription of DNA into RNA using the four ribonucleoside triphosphates as substrates. Largest and catalytic component of RNA polymerase II which synthesizes mRNA precursors and many functional non-coding RNAs. Forms the polymerase active center together with the second largest subunit. Pol II is the central component of the basal RNA polymerase II transcription machinery. It is composed of mobile elements that move relative to each other. NRPB1 is part of the core element with the central large cleft, the clamp element that moves to open and close the cleft and the jaws that are thought to grab the incoming DNA template. At the start of transcription, a single-stranded DNA template strand of the promoter is positioned within the central active site cleft of Pol II. A bridging helix emanates from NRPB1 and crosses the cleft near the catalytic site and is thought to promote translocation of Pol II by acting as a ratchet that moves the RNA-DNA hybrid through the active site by switching from straight to bent conformations at each step of nucleotide addition. During transcription elongation, Pol II moves on the template as the transcript elongates. Elongation is influenced by the phosphorylation status of the C-terminal domain (CTD) of Pol II largest subunit (NRPB1), which serves as a platform for assembly of factors that regulate transcription initiation, elongation, termination and mRNA processing. The polypeptide is DNA-directed RNA polymerase II subunit RPB1 (Arabidopsis thaliana (Mouse-ear cress)).